Consider the following 270-residue polypeptide: Formamidopyrimidine-DNA glycosylase (270 aa).

Proline 2 acts as the Schiff-base intermediate with DNA in catalysis. Glutamate 3 (proton donor) is an active-site residue. Lysine 58 serves as the catalytic Proton donor; for beta-elimination activity. Residues histidine 91, arginine 110, and arginine 151 each coordinate DNA. The segment at 236–270 (FVYGRGGEFCKVCGSTLREIRLGQRASVYCPRCQR) adopts an FPG-type zinc-finger fold. The Proton donor; for delta-elimination activity role is filled by arginine 260.

It belongs to the FPG family. Monomer. The cofactor is Zn(2+).

It carries out the reaction Hydrolysis of DNA containing ring-opened 7-methylguanine residues, releasing 2,6-diamino-4-hydroxy-5-(N-methyl)formamidopyrimidine.. It catalyses the reaction 2'-deoxyribonucleotide-(2'-deoxyribose 5'-phosphate)-2'-deoxyribonucleotide-DNA = a 3'-end 2'-deoxyribonucleotide-(2,3-dehydro-2,3-deoxyribose 5'-phosphate)-DNA + a 5'-end 5'-phospho-2'-deoxyribonucleoside-DNA + H(+). Involved in base excision repair of DNA damaged by oxidation or by mutagenic agents. Acts as a DNA glycosylase that recognizes and removes damaged bases. Has a preference for oxidized purines, such as 7,8-dihydro-8-oxoguanine (8-oxoG). Has AP (apurinic/apyrimidinic) lyase activity and introduces nicks in the DNA strand. Cleaves the DNA backbone by beta-delta elimination to generate a single-strand break at the site of the removed base with both 3'- and 5'-phosphates. This is Formamidopyrimidine-DNA glycosylase from Pseudomonas paraeruginosa (strain DSM 24068 / PA7) (Pseudomonas aeruginosa (strain PA7)).